A 595-amino-acid polypeptide reads, in one-letter code: Myb-like protein D (595 aa).

Disordered regions lie at residues 1-47 (MQQQ…NGLV), 55-74 (QQYQDDQNDSFDDDSMDEGE), 82-266 (DESQ…NNRK), and 319-445 (VLQK…IWTQ). A compositionally biased stretch (low complexity) spans 19 to 47 (DNYNNNNSNINTNNNNSINDYENQNNGLV). Residues 60-74 (DQNDSFDDDSMDEGE) show a composition bias toward acidic residues. Low complexity-rich tracts occupy residues 90 to 212 (NNNN…ENNN) and 225 to 264 (NNNNNNNNNNNNNNNNNNNNNNNNKNNNNNNNNNNNNNNN). A compositionally biased stretch (basic residues) spans 324-348 (TLNRNRSRSRSRSNSRSHSRSRSRS). 2 stretches are compositionally biased toward low complexity: residues 349 to 368 (RSLSSISRSRSRSRLIYSRS) and 376 to 420 (NNNN…NNNN). Residues 423 to 434 (RKSEDDNQDDGK) show a composition bias toward basic and acidic residues. Residues 435–489 (KKHRKNAIWTQEEDEKMAQLYNKYGKSWKAIHSHFDDKTREQVQSHGQYLIRIGK) enclose the HTH myb-type domain. Residues 462-485 (WKAIHSHFDDKTREQVQSHGQYLI) constitute a DNA-binding region (H-T-H motif). The disordered stretch occupies residues 494-595 (HRDGRKERRK…NSSNYVNNDN (102 aa)). Residues 517-595 (QQNQQNNNNN…NSSNYVNNDN (79 aa)) show a composition bias toward low complexity.

Its subcellular location is the nucleus. This is Myb-like protein D (mybD) from Dictyostelium discoideum (Social amoeba).